A 539-amino-acid chain; its full sequence is Eukaryotic translation initiation factor 3 subunit L (539 aa).

A PCI domain is found at 306–514; the sequence is TFSDILLYIQ…IHIADTKVSH (209 aa).

This sequence belongs to the eIF-3 subunit L family. As to quaternary structure, component of the eukaryotic translation initiation factor 3 (eIF-3) complex. The eIF-3 complex interacts with pix.

The protein resides in the cytoplasm. Component of the eukaryotic translation initiation factor 3 (eIF-3) complex, which is involved in protein synthesis of a specialized repertoire of mRNAs and, together with other initiation factors, stimulates binding of mRNA and methionyl-tRNAi to the 40S ribosome. The eIF-3 complex specifically targets and initiates translation of a subset of mRNAs involved in cell proliferation. The sequence is that of Eukaryotic translation initiation factor 3 subunit L from Drosophila ananassae (Fruit fly).